We begin with the raw amino-acid sequence, 489 residues long: Poly(A) RNA polymerase GLD2 (489 aa).

Residues 93 to 118 (RQRFSCPSPHNQSARNSNFTSQPVTR) form a disordered region. The span at 100–116 (SPHNQSARNSNFTSQPV) shows a compositional bias: polar residues. The Mg(2+) site is built by D219 and D221. A PAP-associated domain is found at 386 to 440 (SLGDLFLGFLRYYATVFKWDKQVISVRMARTLPKSNCKEWKDKFICVEEPFNRTN).

This sequence belongs to the DNA polymerase type-B-like family. GLD2 subfamily. Mg(2+) serves as cofactor. The cofactor is Mn(2+).

The protein localises to the cytoplasm. The enzyme catalyses RNA(n) + ATP = RNA(n)-3'-adenine ribonucleotide + diphosphate. In terms of biological role, cytoplasmic poly(A) RNA polymerase that adds successive AMP monomers to the 3'-end of specific RNAs, forming a poly(A) tail. In contrast to the canonical nuclear poly(A) RNA polymerase, it only adds poly(A) to selected cytoplasmic mRNAs. May not play a role in replication-dependent histone mRNA degradation. The sequence is that of Poly(A) RNA polymerase GLD2 from Danio rerio (Zebrafish).